A 181-amino-acid polypeptide reads, in one-letter code: Reverse rubrerythrin-1 (181 aa).

In terms of domain architecture, Rubredoxin-like spans 1–35; the sequence is MKKFKCVVCGYIYTGEDAPEKCPVCGAGKDKFVEV. Fe cation-binding residues include C6, C9, C22, C25, E69, E102, E132, E165, and H168. One can recognise a Ferritin-like diiron domain in the interval 52–181; that stretch reads KGVDKEVLEG…FRGLLNRYFK (130 aa).

In terms of assembly, homodimer. Fe(3+) is required as a cofactor.

It catalyses the reaction H2O2 + NADH + H(+) = NAD(+) + 2 H2O. Functions as the terminal component of an NADH peroxidase (NADH:H(2)O(2) oxidoreductase) when using NADH:rubredoxin oxidoreductase (NROR) and rubredoxin (Rd) as electron transport intermediaries from NADH to revRbr 1. Plays an important role in the oxidative stress defense system in C.acetobutylicum, an obligate anaerobic bacterium. Also exhibits NADH oxidase (NADH:O(2) oxidoreductase) activity in vitro, which is 100-fold lesser than that of FprA1/2 using the same electron transfer components. Therefore, its predominant function is most likely as a scavenger of its preferred substrate, H(2)O(2). The sequence is that of Reverse rubrerythrin-1 (rbr3A) from Clostridium acetobutylicum (strain ATCC 824 / DSM 792 / JCM 1419 / IAM 19013 / LMG 5710 / NBRC 13948 / NRRL B-527 / VKM B-1787 / 2291 / W).